We begin with the raw amino-acid sequence, 430 residues long: Serine--tRNA ligase (430 aa).

237-239 (TAE) serves as a coordination point for L-serine. 268-270 (RRE) serves as a coordination point for ATP. Glu-291 provides a ligand contact to L-serine. 355–358 (EISS) contributes to the ATP binding site. An L-serine-binding site is contributed by Ser-391.

The protein belongs to the class-II aminoacyl-tRNA synthetase family. Type-1 seryl-tRNA synthetase subfamily. As to quaternary structure, homodimer. The tRNA molecule binds across the dimer.

It is found in the cytoplasm. It carries out the reaction tRNA(Ser) + L-serine + ATP = L-seryl-tRNA(Ser) + AMP + diphosphate + H(+). The enzyme catalyses tRNA(Sec) + L-serine + ATP = L-seryl-tRNA(Sec) + AMP + diphosphate + H(+). The protein operates within aminoacyl-tRNA biosynthesis; selenocysteinyl-tRNA(Sec) biosynthesis; L-seryl-tRNA(Sec) from L-serine and tRNA(Sec): step 1/1. Catalyzes the attachment of serine to tRNA(Ser). Is also able to aminoacylate tRNA(Sec) with serine, to form the misacylated tRNA L-seryl-tRNA(Sec), which will be further converted into selenocysteinyl-tRNA(Sec). The sequence is that of Serine--tRNA ligase from Magnetococcus marinus (strain ATCC BAA-1437 / JCM 17883 / MC-1).